The primary structure comprises 702 residues: Phosphoglycerol transferase I (702 aa).

The next 3 membrane-spanning stretches (helical) occupy residues 5–24 (LLVS…RLAW), 73–95 (GYIA…VRIR), and 102–124 (GGGA…SPLY).

It belongs to the OpgB family.

The protein localises to the cell inner membrane. The catalysed reaction is a phosphatidylglycerol + a membrane-derived-oligosaccharide D-glucose = a 1,2-diacyl-sn-glycerol + a membrane-derived-oligosaccharide 6-(glycerophospho)-D-glucose.. It participates in glycan metabolism; osmoregulated periplasmic glucan (OPG) biosynthesis. Transfers a phosphoglycerol residue from phosphatidylglycerol to the membrane-bound nascent glucan backbones. This Xanthomonas axonopodis pv. citri (strain 306) protein is Phosphoglycerol transferase I.